The following is a 1196-amino-acid chain: DNA-directed RNA polymerase subunit beta (1196 aa).

The protein belongs to the RNA polymerase beta chain family. In terms of assembly, the RNAP catalytic core consists of 2 alpha, 1 beta, 1 beta' and 1 omega subunit. When a sigma factor is associated with the core the holoenzyme is formed, which can initiate transcription.

It carries out the reaction RNA(n) + a ribonucleoside 5'-triphosphate = RNA(n+1) + diphosphate. Its function is as follows. DNA-dependent RNA polymerase catalyzes the transcription of DNA into RNA using the four ribonucleoside triphosphates as substrates. In Lactococcus lactis subsp. cremoris (strain MG1363), this protein is DNA-directed RNA polymerase subunit beta.